A 265-amino-acid polypeptide reads, in one-letter code: Tryptophan synthase alpha chain (265 aa).

Catalysis depends on proton acceptor residues glutamate 49 and aspartate 60.

Belongs to the TrpA family. Tetramer of two alpha and two beta chains.

It carries out the reaction (1S,2R)-1-C-(indol-3-yl)glycerol 3-phosphate + L-serine = D-glyceraldehyde 3-phosphate + L-tryptophan + H2O. It participates in amino-acid biosynthesis; L-tryptophan biosynthesis; L-tryptophan from chorismate: step 5/5. Its function is as follows. The alpha subunit is responsible for the aldol cleavage of indoleglycerol phosphate to indole and glyceraldehyde 3-phosphate. This chain is Tryptophan synthase alpha chain, found in Desulfatibacillum aliphaticivorans.